The chain runs to 364 residues: Peptide chain release factor 1 (364 aa).

An N5-methylglutamine modification is found at Q232.

Belongs to the prokaryotic/mitochondrial release factor family. Post-translationally, methylated by PrmC. Methylation increases the termination efficiency of RF1.

It is found in the cytoplasm. Functionally, peptide chain release factor 1 directs the termination of translation in response to the peptide chain termination codons UAG and UAA. This Sorangium cellulosum (strain So ce56) (Polyangium cellulosum (strain So ce56)) protein is Peptide chain release factor 1.